We begin with the raw amino-acid sequence, 162 residues long: Disulfide bond formation protein B (162 aa).

The Cytoplasmic segment spans residues 1–4 (MRII). The helical transmembrane segment at 5–21 (FLLIFLACAGLIGYALY) threads the bilayer. Residues 22-39 (LQLMDGLLPCPLCIFQRI) lie on the Periplasmic side of the membrane. Cys-31 and Cys-34 are oxidised to a cystine. A helical membrane pass occupies residues 40–56 (AYWLIGITALFTFIHNP). At 57-62 (QSLGQH) the chain is on the cytoplasmic side. A helical membrane pass occupies residues 63–80 (IYYGLIILFSLAGAIVAG). Over 81–136 (RQAWLIRFPEAFECGISPEEAFLNGLPLAQWWPNMFEANGDCNDGTWQFLSLTLPD) the chain is Periplasmic. Residues Cys-94 and Cys-122 are joined by a disulfide bond. Residues 137-155 (WSLLIFAAFGIIAGLLWHK) form a helical membrane-spanning segment. The Cytoplasmic segment spans residues 156–162 (KYNSINQ).

It belongs to the DsbB family.

Its subcellular location is the cell inner membrane. Required for disulfide bond formation in some periplasmic proteins. Acts by oxidizing the DsbA protein. This chain is Disulfide bond formation protein B, found in Nitrosomonas eutropha (strain DSM 101675 / C91 / Nm57).